Consider the following 66-residue polypeptide: Large ribosomal subunit protein bL33c (66 aa).

This sequence belongs to the bacterial ribosomal protein bL33 family.

The protein resides in the plastid. It is found in the chloroplast. This is Large ribosomal subunit protein bL33c from Lotus japonicus (Lotus corniculatus var. japonicus).